The sequence spans 186 residues: Probable RNA 2'-phosphotransferase (186 aa).

This sequence belongs to the KptA/TPT1 family.

Functionally, removes the 2'-phosphate from RNA via an intermediate in which the phosphate is ADP-ribosylated by NAD followed by a presumed transesterification to release the RNA and generate ADP-ribose 1''-2''-cyclic phosphate (APPR&gt;P). May function as an ADP-ribosylase. This is Probable RNA 2'-phosphotransferase from Pectobacterium carotovorum subsp. carotovorum (strain PC1).